A 368-amino-acid chain; its full sequence is UPF0284 protein SYNPCC7002_A1742 (368 aa).

It belongs to the UPF0284 family.

This Picosynechococcus sp. (strain ATCC 27264 / PCC 7002 / PR-6) (Agmenellum quadruplicatum) protein is UPF0284 protein SYNPCC7002_A1742.